Here is a 182-residue protein sequence, read N- to C-terminus: UPF0398 protein lwe1908 (182 aa).

The protein belongs to the UPF0398 family.

This is UPF0398 protein lwe1908 from Listeria welshimeri serovar 6b (strain ATCC 35897 / DSM 20650 / CCUG 15529 / CIP 8149 / NCTC 11857 / SLCC 5334 / V8).